Reading from the N-terminus, the 352-residue chain is Dysbindin (352 aa).

Ser11 is modified (phosphoserine). The stretch at 92–180 (TSLAELQEQL…AELDTEHAQK (89 aa)) forms a coiled coil. Positions 243–256 (LMDLSDQEALDVFL) match the Nuclear export signal motif. Residues 267 to 352 (SPGLEMESNP…SDQCDSTQDI (86 aa)) are disordered. A compositionally biased stretch (polar residues) spans 274–285 (SNPSQNEMNLQI). Positions 286-301 (PNPSESASQPPASPSA) are enriched in low complexity. Phosphoserine is present on residues Ser340 and Ser343.

This sequence belongs to the dysbindin family. Interacts (via its coiled coil domain) with KXD1. Interacts with AP3B2, TRIM32, CMYA5, PI4K2 and RNF151. Interacts with the DNA-dependent protein kinase complex DNA-PK; the interaction phosphorylates DTNBP1 in vitro. Interacts directly in this complex with XRCC5 and XRCC6. Interacts with XPO1; the interaction exports DTNBP1 out of the nucleus. Component of the biogenesis of lysosome-related organelles complex 1 (BLOC-1) composed of at least BLOC1S1, BLOC1S2, BLOC1S3, BLOC1S4, BLOC1S5, BLOC1S6, DTNBP1/BLOC1S7 and SNAPIN/BLOC1S8. Interacts directly in the complex with BLOC1S5, BLOC1S6 and SNAPIN/BLOC1S8. The BLOC-1 complex associates with the AP-3 protein complex and membrane protein cargos. This BLOC-1 complex also associates with the BLOC-2 complex in endosomes. Binds to DTNA and DTNB but may not be a physiological binding partner. Interacts with AP3M1. Post-translationally, ubiquitinated by TRIM32. Ubiquitination leads to DTNBP1 degradation. Detected in hippocampus neurons (at protein level). Ubiquitously expressed. The highest expression is observed in testis, liver, kidney, brain, heart and lung. In the brain, found primarily in axon bundles and axon terminals, notably in the cerebellum and hippocampus. Expressed at lower levels in stomach, small intestine and skeletal muscle, where it is detected at the sarcolemma.

It localises to the cytoplasm. It is found in the cytoplasmic vesicle membrane. The protein localises to the cytoplasmic vesicle. Its subcellular location is the secretory vesicle. The protein resides in the synaptic vesicle membrane. It localises to the endosome membrane. It is found in the melanosome membrane. The protein localises to the nucleus. Its subcellular location is the postsynaptic density. The protein resides in the presynaptic cell membrane. It localises to the endoplasmic reticulum. Functionally, component of the BLOC-1 complex, a complex that is required for normal biogenesis of lysosome-related organelles (LRO), such as platelet dense granules and melanosomes. In concert with the AP-3 complex, the BLOC-1 complex is required to target membrane protein cargos into vesicles assembled at cell bodies for delivery into neurites and nerve terminals. The BLOC-1 complex, in association with SNARE proteins, is also proposed to be involved in neurite extension. Associates with the BLOC-2 complex to facilitate the transport of TYRP1 independent of AP-3 function. Plays a role in synaptic vesicle trafficking and in neurotransmitter release. Plays a role in the regulation of cell surface exposure of DRD2. May play a role in actin cytoskeleton reorganization and neurite outgrowth. May modulate MAPK8 phosphorylation. Appears to promote neuronal transmission and viability through regulating the expression of SNAP25 and SYN1, modulating PI3-kinase-Akt signaling and influencing glutamatergic release. Regulates the expression of SYN1 through binding to its promoter. Modulates prefrontal cortical activity via the dopamine/D2 pathway. The sequence is that of Dysbindin (Dtnbp1) from Rattus norvegicus (Rat).